We begin with the raw amino-acid sequence, 224 residues long: Small ribosomal subunit protein uS3 (224 aa).

One can recognise a KH type-2 domain in the interval 38–106; that stretch reads LREFVKEKLG…EVYLNVVEVR (69 aa).

This sequence belongs to the universal ribosomal protein uS3 family. As to quaternary structure, part of the 30S ribosomal subunit. Forms a tight complex with proteins S10 and S14.

In terms of biological role, binds the lower part of the 30S subunit head. Binds mRNA in the 70S ribosome, positioning it for translation. The sequence is that of Small ribosomal subunit protein uS3 from Anaeromyxobacter dehalogenans (strain 2CP-C).